We begin with the raw amino-acid sequence, 406 residues long: Kelch domain-containing protein 1 (406 aa).

6 Kelch repeats span residues 24–76 (FLYV…CGAC), 80–134 (RLYV…VYKD), 135–181 (RLIY…TKTR), 208–258 (KGYV…AITD), 260–307 (KLFL…ACLG), and 311–361 (EIMV…LKSQ).

In terms of assembly, component of a CRL5 E3 ubiquitin-protein ligase complex, also named ECS (Elongin BC-CUL2/5-SOCS-box protein) complex, composed of CUL5, Elongin BC (ELOB and ELOC), RBX1 and substrate-specific adapter KLHDC1.

Its subcellular location is the cytoplasm. It localises to the cytosol. It participates in protein modification; protein ubiquitination. In terms of biological role, substrate-recognition component of a Cul5-RING (CRL5) E3 ubiquitin-protein ligase complex of the DesCEND (destruction via C-end degrons) pathway, which recognizes a C-degron located at the extreme C terminus of target proteins, leading to their ubiquitination and degradation. The C-degron recognized by the DesCEND pathway is usually a motif of less than ten residues and can be present in full-length proteins, truncated proteins or proteolytically cleaved forms. The CRL5(KLHDC1) complex mediates ubiquitination and degradation of truncated SELENOS selenoprotein produced by failed UGA/Sec decoding, which ends with a glycine. This Mus musculus (Mouse) protein is Kelch domain-containing protein 1.